The primary structure comprises 285 residues: MTSFSIEAPAKVNLTLHVVGKRDDGYHLLDSLVVFAGIGDTLEFSPAETLSLEVTGPTASQIPDGENIVLKAARLLAEATGVTKGAAIRLTKRLPVAAGIGGGSADAAAALKGLMRLWGVAPPAETLRRVALSIGADVPVCLAGTPMRMMGVGEVLEPAPTLPPAWLVLVNPLVPLHTPPVFKARTGPFSAADPLTAPPRDAKGLAEALAARRNDLTPPAITIEPVVGEVLAAIAATADCLLPRMSGSGATCFGLYAEEAQARAAAAQLGAAHPAWWIAPAQLLS.

K11 is an active-site residue. 95–105 (PVAAGIGGGSA) contacts ATP. D137 is a catalytic residue.

The protein belongs to the GHMP kinase family. IspE subfamily.

It carries out the reaction 4-CDP-2-C-methyl-D-erythritol + ATP = 4-CDP-2-C-methyl-D-erythritol 2-phosphate + ADP + H(+). It functions in the pathway isoprenoid biosynthesis; isopentenyl diphosphate biosynthesis via DXP pathway; isopentenyl diphosphate from 1-deoxy-D-xylulose 5-phosphate: step 3/6. Catalyzes the phosphorylation of the position 2 hydroxy group of 4-diphosphocytidyl-2C-methyl-D-erythritol. This Paramagnetospirillum magneticum (strain ATCC 700264 / AMB-1) (Magnetospirillum magneticum) protein is 4-diphosphocytidyl-2-C-methyl-D-erythritol kinase.